The sequence spans 566 residues: Oxygen-dependent choline dehydrogenase (566 aa).

7–36 (DYIICGAGSAGNVLATRLTEDPNVTVLLLE) is an FAD binding site. Positions 182–204 (YQQEGFGPMDRTVTPKGRRASTA) are disordered. Histidine 474 functions as the Proton acceptor in the catalytic mechanism.

This sequence belongs to the GMC oxidoreductase family. Requires FAD as cofactor.

The catalysed reaction is choline + A = betaine aldehyde + AH2. The enzyme catalyses betaine aldehyde + NAD(+) + H2O = glycine betaine + NADH + 2 H(+). The protein operates within amine and polyamine biosynthesis; betaine biosynthesis via choline pathway; betaine aldehyde from choline (cytochrome c reductase route): step 1/1. Involved in the biosynthesis of the osmoprotectant glycine betaine. Catalyzes the oxidation of choline to betaine aldehyde and betaine aldehyde to glycine betaine at the same rate. The sequence is that of Oxygen-dependent choline dehydrogenase from Burkholderia multivorans (strain ATCC 17616 / 249).